The chain runs to 485 residues: PTS system arbutin-, cellobiose-, and salicin-specific EIIBC component (485 aa).

Positions Met1 to Pro88 constitute a PTS EIIB type-1 domain. Cys28 acts as the Phosphocysteine intermediate; for EIIB activity in catalysis. 10 helical membrane-spanning segments follow: residues Ile102–Ile122, Leu147–Ala167, Met177–Ala197, Phe207–Met227, Leu254–Ile274, Ile285–Val305, Val330–Trp350, Ala363–Ile383, Leu389–Ala409, and Ile433–Leu453. One can recognise a PTS EIIC type-1 domain in the interval Asp108–Lys470.

It localises to the cell inner membrane. In terms of biological role, the phosphoenolpyruvate-dependent sugar phosphotransferase system (sugar PTS), a major carbohydrate active -transport system, catalyzes the phosphorylation of incoming sugar substrates concomitantly with their translocation across the cell membrane. This system is involved in arbutin, cellobiose, and salicin transport. This is PTS system arbutin-, cellobiose-, and salicin-specific EIIBC component (ascF) from Escherichia coli (strain K12).